The following is a 1174-amino-acid chain: Pecanex-like protein 4 (1174 aa).

14 helical membrane-spanning segments follow: residues I40–L60, A72–V92, T140–P160, T173–V193, L217–A237, I244–P264, S284–V304, F307–L327, F366–V386, S394–L414, I451–L471, L543–E563, V580–L600, and L643–S663. Over residues P785–E797 the composition is skewed to polar residues. The tract at residues P785–K875 is disordered. N790 carries N-linked (GlcNAc...) asparagine glycosylation. The span at A798–P810 shows a compositional bias: low complexity. Positions P835–S846 are enriched in basic and acidic residues. N-linked (GlcNAc...) asparagine glycosylation is found at N1122 and N1149.

It belongs to the pecanex family.

It localises to the membrane. The sequence is that of Pecanex-like protein 4 from Mus musculus (Mouse).